The chain runs to 189 residues: dTTP/UTP pyrophosphatase (189 aa).

Asp-70 (proton acceptor) is an active-site residue. Residues Cys-74 and Cys-79 are joined by a disulfide bond.

This sequence belongs to the Maf family. YhdE subfamily. In terms of assembly, homodimer. A divalent metal cation serves as cofactor.

The protein resides in the cytoplasm. The enzyme catalyses dTTP + H2O = dTMP + diphosphate + H(+). The catalysed reaction is UTP + H2O = UMP + diphosphate + H(+). It catalyses the reaction CTP + H2O = CMP + diphosphate + H(+). It carries out the reaction psi-UTP + H2O = psi-UMP + diphosphate + H(+). The enzyme catalyses 5-methyl-CTP + H2O = 5-methyl-CMP + diphosphate + H(+). The catalysed reaction is 5-methyl-UTP + H2O = 5-methyl-UMP + diphosphate + H(+). In terms of biological role, nucleoside triphosphate pyrophosphatase that hydrolyzes dTTP and UTP. Can also hydrolyze CTP and the modified nucleotides pseudo-UTP, 5-methyl-CTP (m(5)CTP) and 5-methyl-UTP (m(5)UTP). May have a dual role in cell division arrest and in preventing the incorporation of modified nucleotides into cellular nucleic acids. This Bacillus subtilis (strain 168) protein is dTTP/UTP pyrophosphatase.